Reading from the N-terminus, the 725-residue chain is Kinesin-like protein KIN-8A (725 aa).

The interval 1 to 32 (MPVSTRSKVMKQERNEQENTNLNLPLRNPHQG) is disordered. A Kinesin motor domain is found at 151-481 (RILVFVRLRP…LHWADRAKEI (331 aa)). ATP is bound at residue 243–250 (GATGAGKT). 2 coiled-coil regions span residues 499 to 541 (EGAD…AANN) and 583 to 617 (ESLK…EHGL). Disordered regions lie at residues 652-672 (GSLR…RFAS) and 691-725 (SPAL…HMKH). The segment covering 655–665 (RPKEKEKELKS) has biased composition (basic and acidic residues).

Belongs to the TRAFAC class myosin-kinesin ATPase superfamily. Kinesin family. KIN-8 subfamily.

The sequence is that of Kinesin-like protein KIN-8A from Arabidopsis thaliana (Mouse-ear cress).